The chain runs to 258 residues: Short-chain dehydrogenase/reductase aba4 (258 aa).

Residues I20, D66, and K130 each coordinate NADP(+). Residues S146 and Y160 each act as proton donor in the active site. NADP(+) contacts are provided by Y160, K164, I193, and T195. The Lowers pKa of active site Tyr role is filled by K164.

It belongs to the short-chain dehydrogenases/reductases (SDR) family.

The protein operates within hormone biosynthesis. Short-chain dehydrogenase/reductase; part of the gene cluster that mediates the biosynthesis of abscisic acid (ABA), a phytohormone that acts antagonistically toward salicylic acid (SA), jasmonic acid (JA) and ethylene (ETH) signaling, to impede plant defense responses. The first step of the pathway catalyzes the reaction from farnesyl diphosphate to alpha-ionylideneethane performed by the alpha-ionylideneethane synthase aba3 via a three-step reaction mechanism involving 2 neutral intermediates, beta-farnesene and allofarnesene. The cytochrome P450 monooxygenase aba1 might then be involved in the conversion of alpha-ionylideneethane to alpha-ionylideneacetic acid. Alpha-ionylideneacetic acid is further converted to abscisic acid in 2 steps involving the cytochrome P450 monooxygenase aba2 and the short-chain dehydrogenase/reductase aba4, via the intermediates 1'-deoxy-ABA or 1',4'-trans-diol-ABA, depending on the order of action of these 2 enzymes. Aba2 is responsible for the hydroxylation of carbon atom C-1' and aba4 might be involved in the oxidation of the C-4' carbon atom. This is Short-chain dehydrogenase/reductase aba4 from Botryotinia fuckeliana (Noble rot fungus).